The following is a 153-amino-acid chain: Large ribosomal subunit protein uL22 (153 aa).

It belongs to the universal ribosomal protein uL22 family. In terms of assembly, part of the 50S ribosomal subunit.

Its function is as follows. This protein binds specifically to 23S rRNA. It makes multiple contacts with different domains of the 23S rRNA in the assembled 50S subunit and ribosome. Functionally, the globular domain of the protein is located near the polypeptide exit tunnel on the outside of the subunit, while an extended beta-hairpin is found that lines the wall of the exit tunnel in the center of the 70S ribosome. The sequence is that of Large ribosomal subunit protein uL22 from Methanoculleus marisnigri (strain ATCC 35101 / DSM 1498 / JR1).